The chain runs to 576 residues: S-layer protein (576 aa).

An N-terminal signal peptide occupies residues lysine 1 to alanine 23. 2 N-linked (GlcNAc...) asparagine glycosylation sites follow: asparagine 102 and asparagine 132.

Belongs to the Mj S-layer protein family. In terms of processing, N-linked glycans consist of the 779 Da trisaccharide beta-ManNAc(Thr)-(1-4)-beta-GlcNAc3NAcA-(1-3)-beta-GlcNAc.

The protein resides in the secreted. It localises to the cell wall. Its subcellular location is the S-layer. S-layer protein. The S-layer is a paracrystalline mono-layered assembly of proteins which coat the surface of the cell. The sequence is that of S-layer protein (sla) from Methanococcus voltae.